The chain runs to 77 residues: U8-lycotoxin-Ls1f (77 aa).

The signal sequence occupies residues 1-20 (MKLIIFTGLVLFAIVSLIEV). Residues 21-26 (QADNER) constitute a propeptide that is removed on maturation.

Belongs to the neurotoxin 19 (CSTX) family. 08 (U8-Lctx) subfamily. Contains 4 disulfide bonds. In terms of tissue distribution, expressed by the venom gland.

Its subcellular location is the secreted. This is U8-lycotoxin-Ls1f from Lycosa singoriensis (Wolf spider).